The primary structure comprises 334 residues: MRLLSLLTFSLFAVIGLAPAAQAKDKLTIYTYDSFVSEWGPGPKVKENFEKECDCEVNFVASADGVALLNRLKLEGSKTAADIVLGLDTNLTTEARASGFFAPSGIDQTNVKVPGNFKDDIFVPYDYGYFAVVYDSEKLPNPPKSLKELVEGDPAQKIVLQDPRTATPGLGMLLWMKSVYGDEAGAAWQKLQKRVLTVTPGWSEAYGLFTKGEAPMVLSYTTSPAYHMVVEKTDRYKALAYPEGNYLQIELAAQTTTGAKNPLAKKFLAFMTGPGFQDLIPETNWMFPAGKTSKPLPAAFDALPKPEKTLLIPPYEVAKNRRLWVNEWLAATSR.

The first 23 residues, methionine 1–alanine 23, serve as a signal peptide directing secretion. Thiamine-binding positions include aspartate 64–glycine 65, alanine 166–threonine 167, tryptophan 202, and tyrosine 220–serine 223.

This sequence belongs to the bacterial solute-binding protein 1 family. As to quaternary structure, the complex is composed of two ATP-binding proteins (ThiQ), two transmembrane proteins (ThiP) and a solute-binding protein (ThiB).

It is found in the periplasm. Part of the ABC transporter complex ThiBPQ involved in thiamine import. The sequence is that of Thiamine-binding periplasmic protein (thiB) from Brucella abortus biovar 1 (strain 9-941).